The chain runs to 132 residues: Homeobox protein ceh-1 (132 aa).

The homeobox DNA-binding region spans 1-60; sequence MRRARTAFTYEQLVALENKFKTSRYLSVVERLNLAIQLQLSETQVKIWFQNRRTKWKKHN. A disordered region spans residues 56 to 80; that stretch reads WKKHNPGQDANTPQTPPSSDETQIQ. Polar residues predominate over residues 63-80; the sequence is QDANTPQTPPSSDETQIQ.

The protein localises to the nucleus. This Caenorhabditis elegans protein is Homeobox protein ceh-1 (ceh-1).